We begin with the raw amino-acid sequence, 225 residues long: Rho GDP-dissociation inhibitor 3 (225 aa).

Belongs to the Rho GDI family. As to expression, detected only in brain, lung, kidney and testis.

The protein localises to the cytoplasm. In terms of biological role, inhibits GDP/GTP exchange reaction of RhoB. Interacts specifically with the GDP- and GTP-bound forms of post-translationally processed Rhob and Rhog proteins, both of which show a growth-regulated expression in mammalian cells. Stimulates the release of the GDP-bound but not the GTP-bound RhoB protein. Also inhibits the GDP/GTP exchange of RhoB but shows less ability to inhibit the dissociation of prebound GTP. This is Rho GDP-dissociation inhibitor 3 (Arhgdig) from Mus musculus (Mouse).